Consider the following 182-residue polypeptide: Adenine phosphoribosyltransferase 4 (182 aa).

This sequence belongs to the purine/pyrimidine phosphoribosyltransferase family. In terms of assembly, homodimer.

The protein resides in the cytoplasm. The catalysed reaction is AMP + diphosphate = 5-phospho-alpha-D-ribose 1-diphosphate + adenine. It participates in purine metabolism; AMP biosynthesis via salvage pathway; AMP from adenine: step 1/1. Functionally, catalyzes a salvage reaction resulting in the formation of AMP, that is energically less costly than de novo synthesis. May contribute to the recycling of adenine into adenylate nucleotides and the inactivation of cytokinins by phosphoribosylation. Possesses low activity toward adenine, but can efficiently convert cytokinins from free bases (active form) to the corresponding nucleotides (inactive form). The polypeptide is Adenine phosphoribosyltransferase 4 (APT4) (Arabidopsis thaliana (Mouse-ear cress)).